A 226-amino-acid polypeptide reads, in one-letter code: Late protein I226R (226 aa).

A signal peptide spans Met-1 to Gly-16. N-linked (GlcNAc...) asparagine; by host glycans are attached at residues Asn-142 and Asn-164.

This sequence belongs to the asfivirus I226R family.

Its function is as follows. Plays a role in the inhibition of host NF-kappa-B and IRF3 signaling pathways. Mechanistically, promotes the degradation of host IKBKG through enhancing its ubiquitination leading to inhibition of both pathways. This African swine fever virus (isolate Warthog/Namibia/Wart80/1980) (ASFV) protein is Late protein I226R.